We begin with the raw amino-acid sequence, 551 residues long: Glucans biosynthesis protein D (551 aa).

A signal peptide (tat-type signal) is located at residues 1–32 (MNRRRFIKGSMAMAAVCGSSGIASLFSQAAFA).

The protein belongs to the OpgD/OpgG family. Predicted to be exported by the Tat system. The position of the signal peptide cleavage has not been experimentally proven.

The protein localises to the periplasm. It participates in glycan metabolism; osmoregulated periplasmic glucan (OPG) biosynthesis. In terms of biological role, probably involved in the control of the structural glucose backbone of osmoregulated periplasmic glucans (OPGs). The protein is Glucans biosynthesis protein D of Salmonella paratyphi A (strain ATCC 9150 / SARB42).